A 69-amino-acid polypeptide reads, in one-letter code: Large ribosomal subunit protein bL31 (69 aa).

Cys17, Cys19, Cys37, and Cys40 together coordinate Zn(2+).

The protein belongs to the bacterial ribosomal protein bL31 family. Type A subfamily. As to quaternary structure, part of the 50S ribosomal subunit. Zn(2+) serves as cofactor.

In terms of biological role, binds the 23S rRNA. In Clostridium botulinum (strain Eklund 17B / Type B), this protein is Large ribosomal subunit protein bL31.